An 823-amino-acid chain; its full sequence is Dimethyl sulfoxide/trimethylamine N-oxide reductase (823 aa).

The segment at residues 1–42 (MTKFSGNELRAELYRRAFLSYSVAPGALGMFGRSLLAKGARA) is a signal peptide (tat-type signal). Mo-bis(molybdopterin guanine dinucleotide) is bound by residues 156 to 160 (YGWKS), W158, S189, 232 to 233 (KT), 262 to 263 (ID), 283 to 285 (QTD), 364 to 365 (WS), R368, N476, H480, 500 to 501 (HD), R523, D553, 685 to 686 (HP), 691 to 693 (HSQ), N779, and 796 to 797 (GQ).

Homodimer. Mo-bis(molybdopterin guanine dinucleotide) is required as a cofactor. Post-translationally, predicted to be exported by the Tat system. The position of the signal peptide cleavage has been experimentally proven.

The protein localises to the periplasm. It carries out the reaction dimethyl sulfide + a menaquinone + H2O = dimethyl sulfoxide + a menaquinol. The catalysed reaction is trimethylamine + 2 Fe(III)-[cytochrome c] + H2O = trimethylamine N-oxide + 2 Fe(II)-[cytochrome c] + 3 H(+). Its function is as follows. Catalyzes the reduction of dimethyl sulfoxide (DMSO) and trimethylamine N-oxide (TMAO) to dimethyl sulfide (DMS) and trimethylamine, respectively. The terminal DMSO reductase can also use various sulfoxides and N-oxide compounds as terminal electron acceptor in addition to DMSO and TMAO. This is Dimethyl sulfoxide/trimethylamine N-oxide reductase (dorA) from Rhodobacter capsulatus (Rhodopseudomonas capsulata).